Reading from the N-terminus, the 166-residue chain is Nucleotide-binding protein Dred_1927 (166 aa).

It belongs to the YajQ family.

Functionally, nucleotide-binding protein. The sequence is that of Nucleotide-binding protein Dred_1927 from Desulforamulus reducens (strain ATCC BAA-1160 / DSM 100696 / MI-1) (Desulfotomaculum reducens).